Reading from the N-terminus, the 421-residue chain is Cyclin-A1 (421 aa).

The segment at 1 to 21 (MHRQSSKSGVALPPVGQGPDA) is disordered.

The protein belongs to the cyclin family. Cyclin AB subfamily. In terms of assembly, interacts with INCA1 and KLHDC9. Interacts with the CDK2 and CDC2 protein kinases to form a serine/threonine kinase holoenzyme complex. The cyclin subunit imparts substrate specificity to the complex. Found in a complex with CDK2, CABLES1 and CCNE1. Post-translationally, polyubiquitinated via 'Lys-11'-linked ubiquitin by the anaphase-promoting complex (APC/C), leading to its degradation by the proteasome. Deubiquitinated and stabilized by USP37 enables entry into S phase. Ubiquitinated during the G1 phase by the SCF(FBXO31) complex, leading to its proteasomal degradation. In terms of tissue distribution, testis and ovaries.

The protein resides in the nucleus. Its subcellular location is the cytoplasm. The protein localises to the cytoskeleton. It localises to the spindle. In terms of biological role, may be involved in the control of the cell cycle at the G1/S (start) and G2/M (mitosis) transitions. May primarily function in the control of the germline meiotic cell cycle and additionally in the control of mitotic cell cycle in some somatic cells. This is Cyclin-A1 (Ccna1) from Mus musculus (Mouse).